Here is a 111-residue protein sequence, read N- to C-terminus: Disintegrin CV-11-alpha (111 aa).

An N-terminal signal peptide occupies residues 1–20 (MIQVLLVIICLAVFPYQGSS). Residues 21–46 (IILESGNVNDFELVYPKKVTVLPTGA) constitute a propeptide that is removed on maturation. The 65-residue stretch at 47–111 (MNSAHPCCDP…SDCPRNPWKD (65 aa)) folds into the Disintegrin domain. Cystine bridges form between cysteine 53/cysteine 76, cysteine 67/cysteine 73, cysteine 72/cysteine 97, and cysteine 85/cysteine 104. The Cell attachment site signature appears at 89 to 91 (KGD).

The protein belongs to the disintegrin family. Dimeric disintegrin subfamily. In terms of assembly, heterodimer with subunit beta; disulfide-linked. In terms of tissue distribution, expressed by the venom gland.

Its subcellular location is the secreted. Inhibits ADP-induced human platelet aggregation. Antagonist of alpha-IIb/beta-3 (ITGA2B/ITGB3). The sequence is that of Disintegrin CV-11-alpha from Cerastes vipera (Sahara sand viper).